Consider the following 265-residue polypeptide: Type III pantothenate kinase (265 aa).

9–16 (DAGNSRIK) provides a ligand contact to ATP. Residues Y96 and 103-106 (GSDR) contribute to the substrate site. Catalysis depends on D105, which acts as the Proton acceptor. T129 is a binding site for ATP. T189 is a substrate binding site.

The protein belongs to the type III pantothenate kinase family. As to quaternary structure, homodimer. NH4(+) serves as cofactor. K(+) is required as a cofactor.

Its subcellular location is the cytoplasm. The catalysed reaction is (R)-pantothenate + ATP = (R)-4'-phosphopantothenate + ADP + H(+). Its pathway is cofactor biosynthesis; coenzyme A biosynthesis; CoA from (R)-pantothenate: step 1/5. Catalyzes the phosphorylation of pantothenate (Pan), the first step in CoA biosynthesis. The chain is Type III pantothenate kinase from Burkholderia orbicola (strain AU 1054).